The sequence spans 344 residues: Heat-inducible transcription repressor HrcA (344 aa).

It belongs to the HrcA family.

In terms of biological role, negative regulator of class I heat shock genes (grpE-dnaK-dnaJ and groELS operons). Prevents heat-shock induction of these operons. The chain is Heat-inducible transcription repressor HrcA from Aster yellows witches'-broom phytoplasma (strain AYWB).